A 1082-amino-acid polypeptide reads, in one-letter code: Putative white-brown complex homolog protein 30 (1082 aa).

The next 2 helical transmembrane spans lie at 12 to 32 and 292 to 312; these read HIFL…SLDG and NIHA…IMVY. Residues 329 to 348 show a composition bias toward basic and acidic residues; the sequence is SREAAARHAKETTQARERWK. Residues 329 to 437 form a disordered region; that stretch reads SREAAARHAK…QAPKGKQLHT (109 aa). The region spanning 484–726 is the ABC transporter domain; sequence VAFKDLTLTL…FADIGITVPD (243 aa). 518–525 serves as a coordination point for ATP; the sequence is GPSGAGKT. The ABC transmembrane type-2 domain maps to 832–1029; sequence RQYRYFVGRV…TLEAFVLSNA (198 aa). The next 5 helical transmembrane spans lie at 853–873, 877–897, 958–978, 979–999, and 1054–1074; these read ALDF…AKVN, IDTL…KISA, YIVL…FAIL, YSPS…TLIA, and WILC…IAYF.

Belongs to the ABC transporter superfamily. ABCG family. Eye pigment precursor importer (TC 3.A.1.204) subfamily.

It is found in the membrane. The sequence is that of Putative white-brown complex homolog protein 30 (WBC30) from Arabidopsis thaliana (Mouse-ear cress).